The following is a 272-amino-acid chain: HMP-PP phosphatase (272 aa).

Catalysis depends on Asp-8, which acts as the Nucleophile. Mg(2+)-binding residues include Asp-8, Asp-10, and Asp-212.

Belongs to the HAD-like hydrolase superfamily. Cof family. Mg(2+) is required as a cofactor.

It carries out the reaction 4-amino-2-methyl-5-(diphosphooxymethyl)pyrimidine + H2O = 4-amino-2-methyl-5-(phosphooxymethyl)pyrimidine + phosphate + H(+). In terms of biological role, catalyzes the hydrolysis of 4-amino-2-methyl-5-hydroxymethylpyrimidine pyrophosphate (HMP-PP) to 4-amino-2-methyl-5-hydroxymethylpyrimidine phosphate (HMP-P). The sequence is that of HMP-PP phosphatase from Escherichia coli (strain UTI89 / UPEC).